Consider the following 579-residue polypeptide: MDENGTVKPGYELKGLNSGNSRSNMDKDPIVSKFHRAGLNDSADEEDTDINGNRNTSWITSMISEEKRKVEGKSMLNDEEDLHLSKATLNKCDALVKILADIIKLEFVIHQSWYIRSLHKSVLIQFEVETSGGNKNSAGDSGDDDDDNHNGNLDDSFYKDLSLKCIKKCEKSSLALESLSRDIDQIRDFIMSNTIEDNRVDRLLQNSMTLLLECWIYSMKRLRRLRMKIAGIFVRSKLLLIDHELVTIWHFLQEQNEHETVNNENELKLAETIKSYRAFIKIFIQQLEDSESGSPSSSLFEECLHVFLDIESMYNSLNLNWLLNENKALQERLLSPSSTSENDHTNNLPVIDETKEIEDISSFVNSIVDASMLTHDLTPINSSDSDNLSNGEIDRLDGRRLSSSTSDMSLMMQRTSLQKQLPSLLTAFNNARRLEQELQNACKVNDNKHSTKDTDSNIRRNEHAMSSSVSSIISQNSTLASPSPPMSSSFISTAPSQSSSRMSTLPLSPSSSLLESQSQTLKNNMSQWLNQSRSGLNGTKLIPTNHIGFHSNVLNTLYGIGGGPVSKSYKSNQPSSQNT.

Positions 1–27 (MDENGTVKPGYELKGLNSGNSRSNMDK) are disordered. Ser-42 carries the post-translational modification Phosphoserine. Disordered regions lie at residues 378–401 (TPINSSDSDNLSNGEIDRLDGRRL) and 446–518 (DNKH…ESQS). The span at 379–390 (PINSSDSDNLSN) shows a compositional bias: polar residues. Basic and acidic residues predominate over residues 446-463 (DNKHSTKDTDSNIRRNEH). Residues 495-518 (PSQSSSRMSTLPLSPSSSLLESQS) are compositionally biased toward low complexity.

Its function is as follows. Involved in mitochondrial distribution and morphology. The chain is Mitochondrial distribution and morphology protein 36 (MDM36) from Saccharomyces cerevisiae (strain ATCC 204508 / S288c) (Baker's yeast).